The sequence spans 451 residues: Midnolin-B (451 aa).

In terms of domain architecture, Ubiquitin-like spans 20–94 (MNLNIQSTTG…LTLLPSVEAG (75 aa)). Disordered regions lie at residues 187–254 (ASCT…RSRK), 331–372 (RNAK…QTEN), and 388–427 (QKRLRRKARRDSRAPYHWMPTRKSSRTSSNSSTSSGEGSL). 3 stretches are compositionally biased toward low complexity: residues 190-205 (TPGSTPPTTLSPTSST), 237-250 (STRGTEGTSSSPSS), and 336-347 (TSPQSTGPQQTT). The span at 363-372 (SGDRLRQTEN) shows a compositional bias: basic and acidic residues. Residues 388 to 397 (QKRLRRKARR) are compositionally biased toward basic residues. The span at 413–426 (RTSSNSSTSSGEGS) shows a compositional bias: low complexity.

Its subcellular location is the nucleus. The protein localises to the cytoplasm. It is found in the cytosol. It localises to the nucleolus. Facilitates ubiquitin-independent proteasomal degradation of polycomb protein CBX4. Plays a role in inhibiting the activity of glucokinase GCK and both glucose-induced and basal insulin secretion. This chain is Midnolin-B (midn-b), found in Xenopus laevis (African clawed frog).